A 73-amino-acid chain; its full sequence is MRIAVLFFTIFFFMSQVLPAKGKFKEICERPNGSCRDFCLETEIHVGRCLNSRPCCLPLGHQPRIESTTPKKD.

Residues 1–22 (MRIAVLFFTIFFFMSQVLPAKG) form the signal peptide. Disulfide bonds link Cys-28/Cys-55, Cys-35/Cys-49, and Cys-39/Cys-56.

This sequence belongs to the beta-defensin family.

Its subcellular location is the secreted. Its function is as follows. Has antibacterial activity. The sequence is that of Putative beta-defensin 108A from Homo sapiens (Human).